The sequence spans 270 residues: Basigin (270 aa).

Positions 1–21 are cleaved as a signal peptide; sequence MAAVLFALLALALLRAGGASA. The region spanning 22–103 is the Ig-like C2-type domain; it reads AAGTVTTSVQ…TGEATLTVDG (82 aa). At 22-207 the chain is on the extracellular side; it reads AAGTVTTSVQ…VTLRVRSRLA (186 aa). Intrachain disulfides connect C41–C87 and C126–C185. N-linked (GlcNAc...) asparagine glycosylation is found at N44, N75, N152, and N186. In terms of domain architecture, Ig-like V-type spans 105–203; the sequence is PRIKAVKKSE…DAAVVTLRVR (99 aa). The helical transmembrane segment at 208 to 228 threads the bilayer; sequence ALWPFLGIVAEVLVLVTVIFI. Topologically, residues 229–270 are cytoplasmic; the sequence is YEKRRKPDEVLDDEDAGAAPLKSSGHHVNDDKGKNVRQRNAS. A disordered region spans residues 239–270; that stretch reads LDDEDAGAAPLKSSGHHVNDDKGKNVRQRNAS. A Phosphoserine modification is found at S252.

In terms of assembly, homooligomer. Interacts with VEGFA, KDR/VEGFR2, PPIA/CYPA, SLC1A3, SLC16A12, SLC16A11, ATP1B2, MAG, L1CAM and AJAP1. Interacts with PPIL2; regulates BSG transport to the cell membrane. Interacts with XKR8; promoting its localization at the cell membrane. Interacts with SLC16A3; interaction mediates SLC16A3 targeting to the plasma membrane. Interacts with SLC16A1; interaction mediates SLC16A1 targeting to the plasma membrane. Interacts with SLC16A6; this interaction mediates targeting to the plasma membrane.

The protein localises to the cell membrane. It is found in the endoplasmic reticulum membrane. It localises to the basolateral cell membrane. Functionally, signaling receptor for cyclophilins, essential for PPIA/CYPA and PPIB/CYPB-dependent signaling related to chemotaxis and adhesion of immune cells. Plays an important role in targeting the monocarboxylate transporters SLC16A1/GLUT1, SLC16A3, SLC16A8, SLC16A11 and SLC16A12 to the plasma membrane. Acts as a coreceptor for vascular endothelial growth factor receptor 2 (KDR/VEGFR2) in endothelial cells enhancing its VEGFA-mediated activation and downstream signaling. Promotes angiogenesis through EPAS1/HIF2A-mediated up-regulation of VEGFA and KDR/VEGFR2 in endothelial cells. In Oryctolagus cuniculus (Rabbit), this protein is Basigin (BSG).